A 295-amino-acid polypeptide reads, in one-letter code: 33 kDa chaperonin (295 aa).

2 disulfides stabilise this stretch: C236-C238 and C269-C272.

The protein belongs to the HSP33 family. Post-translationally, under oxidizing conditions two disulfide bonds are formed involving the reactive cysteines. Under reducing conditions zinc is bound to the reactive cysteines and the protein is inactive.

The protein resides in the cytoplasm. Functionally, redox regulated molecular chaperone. Protects both thermally unfolding and oxidatively damaged proteins from irreversible aggregation. Plays an important role in the bacterial defense system toward oxidative stress. The polypeptide is 33 kDa chaperonin (Geobacter sp. (strain M21)).